The primary structure comprises 637 residues: Sterol 3-beta-glucosyltransferase UGT80A2 (637 aa).

Disordered regions lie at residues 1–29 (MPEI…RASV) and 66–112 (VAES…TERQ). Residues 13-24 (SSSSSSSSSSSS) show a composition bias toward low complexity. The segment covering 67-79 (AESSGTGNKSFSR) has biased composition (polar residues). Positions 103–112 (RLDKSKTERQ) are enriched in basic and acidic residues.

Belongs to the glycosyltransferase 28 family. In terms of tissue distribution, expressed in roots, cauline leaf epidermal cells, stomata, stamen, pollen and around the base of siliques.

The enzyme catalyses a sterol + UDP-alpha-D-glucose = a sterol 3-beta-D-glucoside + UDP + H(+). Its function is as follows. Involved in the biosynthesis of sterol glucosides. Catalyzes the synthesis of steryl glycosides (SGs) and acyl steryl glycosides (ASGs) which are the most abundant sterol derivatives in higher plants. Can act on several sterols like sitosterol, campesterol and stigmasterol. Both UGT80A2 and UGT80B1 are required for the normal production of SGs and ASGs in seeds. The sequence is that of Sterol 3-beta-glucosyltransferase UGT80A2 (UGT80A2) from Arabidopsis thaliana (Mouse-ear cress).